The following is a 150-amino-acid chain: Arginine repressor (150 aa).

It belongs to the ArgR family.

Its subcellular location is the cytoplasm. The protein operates within amino-acid biosynthesis; L-arginine biosynthesis [regulation]. Its function is as follows. Regulates arginine biosynthesis genes. This Staphylococcus saprophyticus subsp. saprophyticus (strain ATCC 15305 / DSM 20229 / NCIMB 8711 / NCTC 7292 / S-41) protein is Arginine repressor.